The primary structure comprises 222 residues: Pro-opiomelanocortin-1 (222 aa).

The N-terminal stretch at 1–28 is a signal peptide; it reads MVRGERMLCPAWLLALAVLCAAGSEVRA. A propeptide spanning residues 29–105 is cleaved from the precursor; that stretch reads QCMEDARCRD…DPESSPQHEH (77 aa).

The protein belongs to the POMC family. In terms of processing, specific enzymatic cleavages at paired basic residues yield the different active peptides.

Its subcellular location is the secreted. Stimulates the adrenal glands to release cortisol. In terms of biological role, anorexigenic peptide. Increases the pigmentation of skin by increasing melanin production in melanocytes. Functionally, increases the pigmentation of skin by increasing melanin production in melanocytes. Its function is as follows. Endogenous orexigenic opiate. Endogenous opiate. The sequence is that of Pro-opiomelanocortin-1 (pomca) from Cyprinus carpio (Common carp).